A 199-amino-acid chain; its full sequence is Recombination protein RecR (199 aa).

The segment at 58-73 adopts a C4-type zinc-finger fold; that stretch reads CKVCTNLTDQEVCNIC. The Toprim domain occupies 81–176; the sequence is LLICVVEDPR…KVSRIAHGIP (96 aa).

This sequence belongs to the RecR family.

In terms of biological role, may play a role in DNA repair. It seems to be involved in an RecBC-independent recombinational process of DNA repair. It may act with RecF and RecO. The protein is Recombination protein RecR of Alkaliphilus oremlandii (strain OhILAs) (Clostridium oremlandii (strain OhILAs)).